The primary structure comprises 145 residues: Large ribosomal subunit protein uL15 (145 aa).

The segment at 1–43 (MRLNTIKPGAGSKSAAKRVGRGIGSGLGKTCGRGHKGQKSRAG) is disordered. Over residues 21–31 (RGIGSGLGKTC) the composition is skewed to gly residues.

This sequence belongs to the universal ribosomal protein uL15 family. Part of the 50S ribosomal subunit.

Functionally, binds to the 23S rRNA. This chain is Large ribosomal subunit protein uL15, found in Aromatoleum aromaticum (strain DSM 19018 / LMG 30748 / EbN1) (Azoarcus sp. (strain EbN1)).